The following is a 279-amino-acid chain: tRNA (guanine-N(1)-)-methyltransferase (279 aa).

S-adenosyl-L-methionine contacts are provided by residues Gly117 and 141–146 (LGDYVL). Residues 256–279 (WTPDGSGFRAGGDPVADSSDTNEP) form a disordered region.

The protein belongs to the RNA methyltransferase TrmD family. In terms of assembly, homodimer.

It localises to the cytoplasm. The enzyme catalyses guanosine(37) in tRNA + S-adenosyl-L-methionine = N(1)-methylguanosine(37) in tRNA + S-adenosyl-L-homocysteine + H(+). In terms of biological role, specifically methylates guanosine-37 in various tRNAs. The polypeptide is tRNA (guanine-N(1)-)-methyltransferase (Kineococcus radiotolerans (strain ATCC BAA-149 / DSM 14245 / SRS30216)).